The chain runs to 186 residues: Elongation factor P (186 aa).

It belongs to the elongation factor P family.

Its subcellular location is the cytoplasm. It functions in the pathway protein biosynthesis; polypeptide chain elongation. Involved in peptide bond synthesis. Stimulates efficient translation and peptide-bond synthesis on native or reconstituted 70S ribosomes in vitro. Probably functions indirectly by altering the affinity of the ribosome for aminoacyl-tRNA, thus increasing their reactivity as acceptors for peptidyl transferase. The sequence is that of Elongation factor P from Coprothermobacter proteolyticus (strain ATCC 35245 / DSM 5265 / OCM 4 / BT).